The following is a 250-amino-acid chain: Triosephosphate isomerase (250 aa).

9-11 (NWK) is a binding site for substrate. The active-site Electrophile is H95. Catalysis depends on E167, which acts as the Proton acceptor. Residues G173, S213, and 234–235 (GG) contribute to the substrate site.

It belongs to the triosephosphate isomerase family. In terms of assembly, homodimer.

The protein resides in the cytoplasm. It carries out the reaction D-glyceraldehyde 3-phosphate = dihydroxyacetone phosphate. It participates in carbohydrate biosynthesis; gluconeogenesis. Its pathway is carbohydrate degradation; glycolysis; D-glyceraldehyde 3-phosphate from glycerone phosphate: step 1/1. Involved in the gluconeogenesis. Catalyzes stereospecifically the conversion of dihydroxyacetone phosphate (DHAP) to D-glyceraldehyde-3-phosphate (G3P). The chain is Triosephosphate isomerase from Herpetosiphon aurantiacus (strain ATCC 23779 / DSM 785 / 114-95).